A 545-amino-acid chain; its full sequence is Membrane protein insertase YidC (545 aa).

A run of 6 helical transmembrane segments spans residues alanine 10–serine 30, leucine 319–proline 339, tryptophan 341–phenylalanine 361, isoleucine 407–valine 427, isoleucine 467–serine 487, and methionine 502–isoleucine 522.

It belongs to the OXA1/ALB3/YidC family. Type 1 subfamily. Interacts with the Sec translocase complex via SecD. Specifically interacts with transmembrane segments of nascent integral membrane proteins during membrane integration.

It is found in the cell inner membrane. Its function is as follows. Required for the insertion and/or proper folding and/or complex formation of integral membrane proteins into the membrane. Involved in integration of membrane proteins that insert both dependently and independently of the Sec translocase complex, as well as at least some lipoproteins. Aids folding of multispanning membrane proteins. The sequence is that of Membrane protein insertase YidC from Borrelia duttonii (strain Ly).